Reading from the N-terminus, the 142-residue chain is MKTYSAKSHEVQGDWFVVDATDKVLGRLSVELAKRLRGKHKPEYTPHADTGDYIVVINADKIAVTGNKAKDKIYYHHTGYVGNLKSASFEKMKETHPERIIELAVKGMLPKNPLGRAMFKKLKVYTGSEHPHSAQQPQPLNV.

The protein belongs to the universal ribosomal protein uL13 family. As to quaternary structure, part of the 50S ribosomal subunit.

In terms of biological role, this protein is one of the early assembly proteins of the 50S ribosomal subunit, although it is not seen to bind rRNA by itself. It is important during the early stages of 50S assembly. The sequence is that of Large ribosomal subunit protein uL13 from Acidithiobacillus ferrooxidans (strain ATCC 23270 / DSM 14882 / CIP 104768 / NCIMB 8455) (Ferrobacillus ferrooxidans (strain ATCC 23270)).